Reading from the N-terminus, the 252-residue chain is Protein IL-40 (252 aa).

The first 18 residues, 1-18 (MALLQLLLFAMLAACGFS), serve as a signal peptide directing secretion. Asn82 and Asn177 each carry an N-linked (GlcNAc...) asparagine glycan.

In terms of tissue distribution, expressed in bone marrow, spleen and lymph node.

It is found in the secreted. Functionally, probable B cell-associated cytokine that plays a role in the regulation of humoral immune responses. Involved in lymphocyte B cell development and immunoglobulin/IgA production. In Mus musculus (Mouse), this protein is Protein IL-40.